Reading from the N-terminus, the 253-residue chain is Sulfate transporter CysZ (253 aa).

4 consecutive transmembrane segments (helical) span residues 27 to 47 (FVLL…YLAV), 71 to 91 (ILWP…FTVV), 150 to 170 (LFIL…WLLF), and 211 to 231 (IVYV…AAVA).

This sequence belongs to the CysZ family.

It localises to the cell inner membrane. Its function is as follows. High affinity, high specificity proton-dependent sulfate transporter, which mediates sulfate uptake. Provides the sulfur source for the cysteine synthesis pathway. This Pseudomonas syringae pv. tomato (strain ATCC BAA-871 / DC3000) protein is Sulfate transporter CysZ.